The sequence spans 283 residues: DNA repair protein RecO (283 aa).

The protein belongs to the RecO family.

In terms of biological role, involved in DNA repair and RecF pathway recombination. In Gloeothece citriformis (strain PCC 7424) (Cyanothece sp. (strain PCC 7424)), this protein is DNA repair protein RecO.